A 143-amino-acid chain; its full sequence is Hemoglobin subunit alpha-2 (143 aa).

Ser2 is subject to N-acetylserine. Residues 2–143 (SLSAKDKATV…LALALSEKYR (142 aa)) form the Globin domain. O2 is bound at residue His60. His89 is a binding site for heme b.

The protein belongs to the globin family. Hb 2 is a heterotetramer of two alpha-2 and two beta-1 chains. Hb 3 is a heterotetramer of two alpha-2 and two beta-2 chains. Red blood cells.

In terms of biological role, involved in oxygen transport from gills to the various peripheral tissues. The chain is Hemoglobin subunit alpha-2 (hba2) from Boreogadus saida (Polar cod).